Consider the following 109-residue polypeptide: Biphenyl dioxygenase system ferredoxin subunit (109 aa).

One can recognise a Rieske domain in the interval Thr4–Val100. Residues Cys43, His45, Cys63, and His66 each contribute to the [2Fe-2S] cluster site.

The protein belongs to the bacterial ring-hydroxylating dioxygenase ferredoxin component family. This dioxygenase system consists of four proteins: the two subunits of the hydroxylase component (BphA and BphE), a ferredoxin (BphF) and a ferredoxin reductase (BphG).

This protein seems to be a 2Fe-2S ferredoxin. The sequence is that of Biphenyl dioxygenase system ferredoxin subunit (bphF) from Paraburkholderia xenovorans (strain LB400).